The primary structure comprises 271 residues: Nus factor SuhB (271 aa).

Positions 67, 86, and 88 each coordinate Mg(2+). Residue Glu67 participates in substrate binding. Residues 88 to 91 (LDGT), Arg187, and Asp216 contribute to the substrate site.

It belongs to the inositol monophosphatase superfamily. As to quaternary structure, homodimer. The rRNA transcription and antitermination complex (rrnTAC) consists of RNA polymerase (RNAP), NusA, NusB, NusE (rpsJ), NusG, SubB, ribosomal protein S4, DNA and precursor rRNA; S4 is more flexible than other subunits. Interacts with the ribosome and with RNA polymerase. Requires Mg(2+) as cofactor.

It localises to the cytoplasm. It carries out the reaction a myo-inositol phosphate + H2O = myo-inositol + phosphate. Part of the processive rRNA transcription and antitermination complex (rrnTAC). The complex forms an RNA-chaperone ring around the RNA exit tunnel of RNA polymerase (RNAP). It supports rapid transcription and antitermination of rRNA operons, cotranscriptional rRNA folding, and annealing of distal rRNA regions to allow correct ribosome biogenesis. This subunit may play a central role in organizing the structure. In terms of biological role, a ribosome-associated protein, deletion of which alters the expression of 494 genes, suggesting a role in global gene regulation. Involved in control of pathogenesis-related genes. Required for the activation of virulence factors associated with acute infections (type 3 secretion system, T3SS) while suppressing virulence factors associated with chronic infections (biofilm formation and type 6 secretion system, T6SS). It probably acts at a post-transcriptional level. The chain is Nus factor SuhB from Pseudomonas aeruginosa (strain ATCC 15692 / DSM 22644 / CIP 104116 / JCM 14847 / LMG 12228 / 1C / PRS 101 / PAO1).